Consider the following 368-residue polypeptide: MMTMWCLTLFVLWMLRVVGMHVLRYGYTGIFDDTSHMTLTVVGIFDGQHFFTYHVNSSDKASSRANGTISWMANVSAAYPTYLDGERAKGDLIFNQTEQNLLELEIALGYRSQSVLTWTHECNTTENGSFVAGYEGFGWDGETLMELKDNLTLWTGPNYEISWLKQNKTYIDGKIKNISEGDTTIQRNYLKGNCTQWSVIYSGFQPPVTHPVVKGGVRNQNDNRAEAFCTSYGFFPGEINITFIHYGDKVPEDSEPQCNPLLPTLDGTFHQGCYVAIFCNQNYTCRVTHGNWTVEIPISVTSPDDSSSGEVPDHPTANKRYNTMTISSVLLALLLCALLFAFLHYFTTLKQYLRNLAFAWRYRKVRSS.

The first 18 residues, 1–18 (MMTMWCLTLFVLWMLRVV), serve as a signal peptide directing secretion. The segment at 19–114 (GMHVLRYGYT…EIALGYRSQS (96 aa)) is alpha-1-like. Residues asparagine 56, asparagine 66, asparagine 74, asparagine 95, asparagine 123, asparagine 127, asparagine 150, asparagine 167, asparagine 177, asparagine 193, asparagine 240, asparagine 282, and asparagine 291 are each glycosylated (N-linked (GlcNAc...) asparagine; by host). The segment at 115-208 (VLTWTHECNT…VIYSGFQPPV (94 aa)) is alpha-2-like. The segment at 209–303 (THPVVKGGVR…VEIPISVTSP (95 aa)) is alpha-3-like. The chain crosses the membrane as a helical span at residues 321-342 (YNTMTISSVLLALLLCALLFAF).

Interacts with host LILRB1.

It localises to the host membrane. Functionally, plays a role in the protection against host NK cell cytotoxicity by interacting with and modulating the activity of the host inhibitory leukocyte Ig-like receptor 1/LILRB1, which is expressed on monocytes, dendritic cells, as well as subsets of T and NK cells. UL18 exerts an inhibitory effect on LIR-1+ NK cells, while it stimulates LIR-1- NK cell. These modulations prevent lysis of the infected cells by NK cells. This is Glycoprotein UL18 (H301) from Homo sapiens (Human).